A 299-amino-acid polypeptide reads, in one-letter code: GTPase Era (299 aa).

The region spanning 5-172 is the Era-type G domain; it reads KSGFVSIIGR…IDVLKTYLPE (168 aa). The segment at 13 to 20 is G1; sequence GRPNVGKS. 13-20 is a GTP binding site; it reads GRPNVGKS. The segment at 39-43 is G2; sequence QTTRN. The G3 stretch occupies residues 60 to 63; the sequence is DTPG. Residues 60-64 and 122-125 each bind GTP; these read DTPGI and NKID. The G4 stretch occupies residues 122–125; the sequence is NKID. A G5 region spans residues 151–153; the sequence is ISA. One can recognise a KH type-2 domain in the interval 203 to 280; sequence TSEEIPHAIG…YLELWVKVQR (78 aa).

Belongs to the TRAFAC class TrmE-Era-EngA-EngB-Septin-like GTPase superfamily. Era GTPase family. As to quaternary structure, monomer.

Its subcellular location is the cytoplasm. It localises to the cell membrane. An essential GTPase that binds both GDP and GTP, with rapid nucleotide exchange. Plays a role in 16S rRNA processing and 30S ribosomal subunit biogenesis and possibly also in cell cycle regulation and energy metabolism. This is GTPase Era from Staphylococcus aureus (strain bovine RF122 / ET3-1).